A 352-amino-acid polypeptide reads, in one-letter code: 3-dehydroquinate synthase (352 aa).

Residues 60–65, 118–119, Lys-131, Lys-140, and 158–161 each bind NAD(+); these read DGEGAK, TT, and FLET. The Zn(2+) site is built by Glu-173, His-237, and His-253.

The protein belongs to the sugar phosphate cyclases superfamily. Dehydroquinate synthase family. NAD(+) is required as a cofactor. The cofactor is Co(2+). Zn(2+) serves as cofactor.

Its subcellular location is the cytoplasm. It catalyses the reaction 7-phospho-2-dehydro-3-deoxy-D-arabino-heptonate = 3-dehydroquinate + phosphate. It participates in metabolic intermediate biosynthesis; chorismate biosynthesis; chorismate from D-erythrose 4-phosphate and phosphoenolpyruvate: step 2/7. Catalyzes the conversion of 3-deoxy-D-arabino-heptulosonate 7-phosphate (DAHP) to dehydroquinate (DHQ). The protein is 3-dehydroquinate synthase of Sulfurisphaera tokodaii (strain DSM 16993 / JCM 10545 / NBRC 100140 / 7) (Sulfolobus tokodaii).